The sequence spans 370 residues: Aminomethyltransferase (370 aa).

Belongs to the GcvT family. The glycine cleavage system is composed of four proteins: P, T, L and H.

It catalyses the reaction N(6)-[(R)-S(8)-aminomethyldihydrolipoyl]-L-lysyl-[protein] + (6S)-5,6,7,8-tetrahydrofolate = N(6)-[(R)-dihydrolipoyl]-L-lysyl-[protein] + (6R)-5,10-methylene-5,6,7,8-tetrahydrofolate + NH4(+). Functionally, the glycine cleavage system catalyzes the degradation of glycine. The sequence is that of Aminomethyltransferase from Clostridium botulinum (strain Loch Maree / Type A3).